The following is a 275-amino-acid chain: Formamidopyrimidine-DNA glycosylase (275 aa).

The active-site Schiff-base intermediate with DNA is Pro-2. Glu-3 functions as the Proton donor in the catalytic mechanism. Lys-58 acts as the Proton donor; for beta-elimination activity in catalysis. 2 residues coordinate DNA: His-91 and Arg-110. An FPG-type zinc finger spans residues 238-272; it reads QVYGQTGKSCPRCGQAIVKLKVGGRGTHICPKCQK. Arg-262 (proton donor; for delta-elimination activity) is an active-site residue.

It belongs to the FPG family. Monomer. Zn(2+) serves as cofactor.

The catalysed reaction is Hydrolysis of DNA containing ring-opened 7-methylguanine residues, releasing 2,6-diamino-4-hydroxy-5-(N-methyl)formamidopyrimidine.. It carries out the reaction 2'-deoxyribonucleotide-(2'-deoxyribose 5'-phosphate)-2'-deoxyribonucleotide-DNA = a 3'-end 2'-deoxyribonucleotide-(2,3-dehydro-2,3-deoxyribose 5'-phosphate)-DNA + a 5'-end 5'-phospho-2'-deoxyribonucleoside-DNA + H(+). In terms of biological role, involved in base excision repair of DNA damaged by oxidation or by mutagenic agents. Acts as a DNA glycosylase that recognizes and removes damaged bases. Has a preference for oxidized purines, such as 7,8-dihydro-8-oxoguanine (8-oxoG). Has AP (apurinic/apyrimidinic) lyase activity and introduces nicks in the DNA strand. Cleaves the DNA backbone by beta-delta elimination to generate a single-strand break at the site of the removed base with both 3'- and 5'-phosphates. The polypeptide is Formamidopyrimidine-DNA glycosylase (Streptococcus pyogenes serotype M3 (strain ATCC BAA-595 / MGAS315)).